Consider the following 142-residue polypeptide: Arginine decarboxylase proenzyme (142 aa).

The active-site Schiff-base intermediate with substrate; via pyruvic acid is Ser-81. Pyruvic acid (Ser); by autocatalysis is present on Ser-81. The active-site Proton acceptor; for processing activity is the His-86. Cys-101 acts as the Proton donor; for catalytic activity in catalysis.

It belongs to the prokaryotic AdoMetDC family. Type 1 subfamily. Heterooctamer of four alpha and four beta chains arranged as a tetramer of alpha/beta heterodimers. It depends on pyruvate as a cofactor. Is synthesized initially as an inactive proenzyme. Formation of the active enzyme involves a self-maturation process in which the active site pyruvoyl group is generated from an internal serine residue via an autocatalytic post-translational modification. Two non-identical subunits are generated from the proenzyme in this reaction, and the pyruvate is formed at the N-terminus of the alpha chain, which is derived from the carboxyl end of the proenzyme. The post-translation cleavage follows an unusual pathway, termed non-hydrolytic serinolysis, in which the side chain hydroxyl group of the serine supplies its oxygen atom to form the C-terminus of the beta chain, while the remainder of the serine residue undergoes an oxidative deamination to produce ammonia and the pyruvoyl group blocking the N-terminus of the alpha chain.

The catalysed reaction is L-arginine + H(+) = agmatine + CO2. It participates in amine and polyamine biosynthesis; agmatine biosynthesis; agmatine from L-arginine: step 1/1. Its function is as follows. Specifically catalyzes the decarboxylation of L-arginine to agmatine. Has no S-adenosylmethionine decarboxylase (AdoMetDC) activity. In Hyperthermus butylicus (strain DSM 5456 / JCM 9403 / PLM1-5), this protein is Arginine decarboxylase proenzyme.